The sequence spans 54 residues: Anti-adapter protein SpxO (54 aa).

Interacts with SpxH.

Inhibitor of Spx proteolytic control. Acts by interacting with SpxH/YjbH, which disrupts interaction between SpxH and Spx, and inhibits SpxH-enhanced proteolysis of Spx by ClpXP. Required for the stabilization of Spx and activation of Spx-regulated genes in response to cell wall stress. The chain is Anti-adapter protein SpxO from Bacillus subtilis (strain 168).